We begin with the raw amino-acid sequence, 936 residues long: ATP-dependent RNA helicase dbp10 (936 aa).

The segment at 1-48 (MPSRAASPALSENEFDITGALFQNDSDSDAETQKPTKRKKVPAAPNVN) is disordered. The Q motif signature appears at 91–119 (GGFQAMGLNANLLKAIARKGFSVPTPIQR). The Helicase ATP-binding domain maps to 122–294 (IPVIMEDQDV…RAGLQDPTLV (173 aa)). Position 135–142 (135–142 (ARTGSGKT)) interacts with ATP. A DEAD box motif is present at residues 242–245 (DEAD). Disordered stretches follow at residues 337 to 363 (TEAS…EMER), 642 to 684 (EAKK…PDNM), 701 to 721 (TTDK…PTTL), and 843 to 936 (TPGL…SRKK). Positions 341–352 (LRLKEKGPEDSK) are enriched in basic and acidic residues. In terms of domain architecture, Helicase C-terminal spans 360–511 (EMERAVNMKE…SDQVNFAEDV (152 aa)). Positions 663 to 675 (AEVDGDAFSDLEG) are enriched in acidic residues. Residues 701 to 717 (TTDKASKSNSNSKSDST) are compositionally biased toward low complexity. The segment covering 867-895 (EKAPKAADPLRGDYEKMKKKAEAARERAA) has biased composition (basic and acidic residues). The span at 896–906 (SKVGGVTSGGK) shows a compositional bias: low complexity. The span at 907–916 (SEIRNTDDIR) shows a compositional bias: basic and acidic residues. Residues 917–936 (KARKLKQKRREKNARPSRKK) are compositionally biased toward basic residues.

This sequence belongs to the DEAD box helicase family. DDX54/DBP10 subfamily.

It localises to the nucleus. It is found in the nucleolus. The enzyme catalyses ATP + H2O = ADP + phosphate + H(+). In terms of biological role, ATP-binding RNA helicase involved in the biogenesis of 60S ribosomal subunits and is required for the normal formation of 25S and 5.8S rRNAs. This chain is ATP-dependent RNA helicase dbp10 (dbp10), found in Emericella nidulans (strain FGSC A4 / ATCC 38163 / CBS 112.46 / NRRL 194 / M139) (Aspergillus nidulans).